The sequence spans 199 residues: GTP-binding protein Di-Ras2 (199 aa).

Residues Gly14–Ser21, Arg33–Thr39, Asp61–Ser65, and Asn121–Asp124 each bind GTP. Ser35 is modified (phosphoserine). The short motif at Tyr36–Tyr44 is the Effector region element. The residue at position 126 (Ser126) is a Phosphoserine. Ala152–Lys153 lines the GTP pocket. Residue Cys196 is modified to Cysteine methyl ester. A lipid anchor (S-geranylgeranyl cysteine) is attached at Cys196. A propeptide spans Val197 to Met199 (removed in mature form).

It belongs to the small GTPase superfamily. Di-Ras family. In terms of processing, ubiquitinated by the ECS(ASB11) complex via 'Lys-11'-linked ubiquitin chains, leading to its degradation by the proteasome.

The protein resides in the cell membrane. It carries out the reaction GTP + H2O = GDP + phosphate + H(+). Its function is as follows. Displays low GTPase activity and exists predominantly in the GTP-bound form. This is GTP-binding protein Di-Ras2 (DIRAS2) from Macaca fascicularis (Crab-eating macaque).